A 306-amino-acid chain; its full sequence is Mitochondrial uncoupling protein 1 (306 aa).

Solcar repeat units lie at residues 9-102 (LSLP…VKNL), 112-203 (VPLS…VKET), and 212-296 (DNVV…AKKY). Helical transmembrane passes span 15-35 (FACS…LDTA), 71-91 (LRSL…FGGL), 118-138 (ILAG…TDLV), 177-197 (TGLG…LASY), 218-238 (ILSG…VDVV), and 269-289 (YKGF…MFLT).

The protein belongs to the mitochondrial carrier (TC 2.A.29) family. Widely expressed.

The protein localises to the mitochondrion inner membrane. Its function is as follows. PUMPS are mitochondrial transporter proteins that create proton leaks across the inner mitochondrial membrane, thus uncoupling oxidative phosphorylation. This leads to a decrease in the efficiency of oxidative phosphorylation and an increase in heat production. Is involved in protecting plant cells against oxidative stress damage and maintaining the redox balance of the mitochondrial electron transport chain to facilitate photosynthetic metabolism. May play a regulatory role during photorespiration. The protein is Mitochondrial uncoupling protein 1 (PUMP1) of Arabidopsis thaliana (Mouse-ear cress).